The sequence spans 310 residues: E3 ubiquitin-protein ligase CSU1 (310 aa).

Residues 43–67 (CSLCLKPFIDPMCCHKGHVFCRECI) form an RING-type 1; degenerate zinc finger. The stretch at 75 to 95 (KKDIQRRLAAHSSQKKQDKDE) forms a coiled coil. The tract at residues 110-138 (EFDQQNHSAMPRNSDKNHNEDKNGFHGAN) is disordered. Basic and acidic residues predominate over residues 122 to 133 (NSDKNHNEDKNG). An RING-type 2 zinc finger spans residues 221-263 (CPSCKVTLTNTMSLVALSSCGHVFCKKCAEKFMPVDKVCLVCD).

This sequence belongs to the NOSIP family.

It localises to the nucleus. The protein localises to the nucleus speckle. The catalysed reaction is S-ubiquitinyl-[E2 ubiquitin-conjugating enzyme]-L-cysteine + [acceptor protein]-L-lysine = [E2 ubiquitin-conjugating enzyme]-L-cysteine + N(6)-ubiquitinyl-[acceptor protein]-L-lysine.. The protein operates within protein modification; protein ubiquitination. Functionally, RING-finger E3 ubiquitin-protein ligase that plays an major role in maintaining COP1 homeostasis in darkness. Negatively regulates COP1 protein accumulation by targeting COP1 for ubiquitination and subsequent proteasomal degradation in dark-grown seedlings. Negatively regulates the accumulation of SPA1 protein in the dark. This is E3 ubiquitin-protein ligase CSU1 from Arabidopsis thaliana (Mouse-ear cress).